Reading from the N-terminus, the 160-residue chain is 3-dehydroquinate dehydratase (160 aa).

Catalysis depends on Tyr22, which acts as the Proton acceptor. Substrate-binding residues include Asn73, His79, and Asp86. The active-site Proton donor is His99. Substrate is bound by residues 100–101 (IS) and Arg110.

The protein belongs to the type-II 3-dehydroquinase family. Homododecamer.

It carries out the reaction 3-dehydroquinate = 3-dehydroshikimate + H2O. Its pathway is metabolic intermediate biosynthesis; chorismate biosynthesis; chorismate from D-erythrose 4-phosphate and phosphoenolpyruvate: step 3/7. Functionally, catalyzes a trans-dehydration via an enolate intermediate. This Campylobacter lari (strain RM2100 / D67 / ATCC BAA-1060) protein is 3-dehydroquinate dehydratase.